Here is a 120-residue protein sequence, read N- to C-terminus: A-type ATP synthase subunit F (120 aa).

It belongs to the V-ATPase F subunit family. In terms of assembly, has multiple subunits with at least A(3), B(3), C, D, E, F, H, I and proteolipid K(x).

It is found in the cell membrane. Functionally, component of the A-type ATP synthase that produces ATP from ADP in the presence of a proton gradient across the membrane. This Halobacterium salinarum (strain ATCC 29341 / DSM 671 / R1) protein is A-type ATP synthase subunit F.